The following is a 218-amino-acid chain: Transcription initiation factor TFIID subunit 10 (218 aa).

2 stretches are compositionally biased toward low complexity: residues 1-21 (MSCS…ASAP) and 29-39 (APAALPSSTAA). The tract at residues 1–85 (MSCSGSGADP…GAAPVSAGGA (85 aa)) is disordered. An N-acetylserine modification is found at serine 2. Serine 44 is modified (phosphoserine). Threonine 48 bears the Phosphothreonine mark. The span at 48–62 (TAGGPGAGAAAGGTG) shows a compositional bias: gly residues. The short motif at 187–189 (KSK) is the [KR]-[STA]-K motif element. Lysine 189 is subject to Allysine; alternate. The residue at position 189 (lysine 189) is an N6,N6,N6-trimethyllysine; alternate.

This sequence belongs to the TAF10 family. In terms of assembly, component of the TFIID basal transcription factor complex, composed of TATA-box-binding protein TBP, and a number of TBP-associated factors (TAFs), including TAF1, TAF2, TAF3, TAF4, TAF5, TAF6, TAF7, TAF8, TAF9, TAF10, TAF11, TAF12 and TAF13. Component of the TATA-binding protein-free TAF complex (TFTC), the PCAF histone acetylase complex and the STAGA transcription coactivator-HAT complex. The PCAF complex consists at least of TADA2L/ADA2, TADA3L/ADA3, SUPT3H, TAF5L TAF6L, TAF9, TAF10, TAF12 and TRRAP. The TFTC-HAT complex consists at least of TAF5L, TAF6L, TADA3L, SUPT3H, TAF2, TAF4, TAF5, GCN5L2/GCN5, TAF10 and TRRAP. The STAGA transcription coactivator-HAT complex consists at least of SUPT3H, GCN5L2, TAF5L, TAF6L, SUPT7L, TADA3L, TAD1L, TAF10, TAF12, TRRAP and TAF9. The STAGA core complex is associated with a subcomplex required for histone deubiquitination composed of ATXN7L3, ENY2 and USP22. Interacts with TAF3. Interacts with LOXL2. Interacts with TAF12 isoform TAFII20; the interaction is direct. Post-translationally, monomethylated at Lys-189 by SETD7, leading to increased affinity for RNA polymerase II. Lysine deamination at Lys-189 to form allysine is mediated by LOXL2. Allysine formation by LOXL2 results in release of TAF10 from promoters, leading to inhibition of TFIID-dependent transcription.

The protein resides in the nucleus. In terms of biological role, the TFIID basal transcription factor complex plays a major role in the initiation of RNA polymerase II (Pol II)-dependent transcription. TFIID recognizes and binds promoters with or without a TATA box via its subunit TBP, a TATA-box-binding protein, and promotes assembly of the pre-initiation complex (PIC). The TFIID complex consists of TBP and TBP-associated factors (TAFs), including TAF1, TAF2, TAF3, TAF4, TAF5, TAF6, TAF7, TAF8, TAF9, TAF10, TAF11, TAF12 and TAF13. TAF10 is also component of the PCAF histone acetylase complex, the TATA-binding protein-free TAF complex (TFTC) and the STAGA transcription coactivator-HAT complex. May regulate cyclin E expression. In Homo sapiens (Human), this protein is Transcription initiation factor TFIID subunit 10 (TAF10).